A 161-amino-acid chain; its full sequence is Nucleotide-binding protein Bcep1808_2648 (161 aa).

Belongs to the YajQ family.

Functionally, nucleotide-binding protein. The protein is Nucleotide-binding protein Bcep1808_2648 of Burkholderia vietnamiensis (strain G4 / LMG 22486) (Burkholderia cepacia (strain R1808)).